The chain runs to 471 residues: P2X purinoceptor 2 (471 aa).

Over 1 to 42 (MAAAQPKYPAGATARRLARGCWSALWDYETPKVIVVRNRRLG) the chain is Cytoplasmic. Cystine bridges form between Cys-21–Cys-439, Cys-125–Cys-176, Cys-136–Cys-159, Cys-142–Cys-170, Cys-226–Cys-236, and Cys-270–Cys-279. The chain crosses the membrane as a helical span at residues 43–63 (VLYRAVQLLILLYFVWYVFIV). Topologically, residues 64–337 (QKSYQESETG…IVHGQAGKFS (274 aa)) are extracellular. Lys-81 and Lys-83 together coordinate ATP. Asn-133 carries an N-linked (GlcNAc...) asparagine glycan. Residue Asn-194 is glycosylated (N-linked (GlcNAc...) asparagine). Residue Thr-196 participates in ATP binding. Residues Ser-296, Asn-300, and Arg-302 each coordinate ATP. A glycan (N-linked (GlcNAc...) asparagine) is linked at Asn-310. Residue Lys-319 participates in ATP binding. Residues 320–333 (AYGIRIDVIVHGQA) are pore-forming motif. A helical membrane pass occupies residues 338 to 358 (LIPTIINLATALTSVGVGSFL). The Cytoplasmic segment spans residues 359-471 (CDWILLTFMN…PTDPKGLAQL (113 aa)). Residues 400-471 (GQAPPEPGHR…PTDPKGLAQL (72 aa)) are disordered.

It belongs to the P2X receptor family. As to quaternary structure, homotrimer and heterotrimer; functional P2XRs are organized as homomeric and heteromeric trimers. Homotrimer. Forms heterotrimer with P2RX1. Forms heterotrimer with P2RX6. Forms heterotrimer with P2RX3. Expressed in both the central and peripheral nervous system, as well as in the pituitary gland.

The protein localises to the cell membrane. It catalyses the reaction Ca(2+)(in) = Ca(2+)(out). It carries out the reaction K(+)(in) = K(+)(out). The catalysed reaction is Na(+)(in) = Na(+)(out). With respect to regulation, fast activation by external ATP. Exhibits slow desensitization during prolonged ATP activation. Not sensitive to the ATP agonist:alpha/beta-methylene-ATP. Functionally, ATP-gated nonselective transmembrane cation channel permeable to potassium, sodium and calcium. Activation by extracellular ATP induces a variety of cellular responses, such as excitatory postsynaptic responses in sensory neurons, neuromuscular junctions (NMJ) formation, hearing, perception of taste and peristalsis. In the inner ear, regulates sound transduction and auditory neurotransmission, outer hair cell electromotility, inner ear gap junctions, and K(+) recycling. Mediates synaptic transmission between neurons and from neurons to smooth muscle. The polypeptide is P2X purinoceptor 2 (Homo sapiens (Human)).